Reading from the N-terminus, the 184-residue chain is Large ribosomal subunit protein uL6 (184 aa).

The protein belongs to the universal ribosomal protein uL6 family. Part of the 50S ribosomal subunit.

This protein binds to the 23S rRNA, and is important in its secondary structure. It is located near the subunit interface in the base of the L7/L12 stalk, and near the tRNA binding site of the peptidyltransferase center. This chain is Large ribosomal subunit protein uL6, found in Cytophaga hutchinsonii (strain ATCC 33406 / DSM 1761 / CIP 103989 / NBRC 15051 / NCIMB 9469 / D465).